The following is a 389-amino-acid chain: S-adenosylmethionine synthase (389 aa).

Residue His-15 participates in ATP binding. Residue Asp-17 coordinates Mg(2+). Glu-43 contacts K(+). Residues Glu-56 and Gln-99 each coordinate L-methionine. The flexible loop stretch occupies residues Gln-99 to Glu-109. Residues Asp-166 to Lys-168, Arg-234 to Phe-235, Asp-243, Arg-249 to Lys-250, Ala-266, and Lys-270 each bind ATP. An L-methionine-binding site is contributed by Asp-243. Lys-274 provides a ligand contact to L-methionine.

It belongs to the AdoMet synthase family. As to quaternary structure, homotetramer; dimer of dimers. Requires Mg(2+) as cofactor. The cofactor is K(+).

The protein resides in the cytoplasm. It carries out the reaction L-methionine + ATP + H2O = S-adenosyl-L-methionine + phosphate + diphosphate. It functions in the pathway amino-acid biosynthesis; S-adenosyl-L-methionine biosynthesis; S-adenosyl-L-methionine from L-methionine: step 1/1. Catalyzes the formation of S-adenosylmethionine (AdoMet) from methionine and ATP. The overall synthetic reaction is composed of two sequential steps, AdoMet formation and the subsequent tripolyphosphate hydrolysis which occurs prior to release of AdoMet from the enzyme. This Chromobacterium violaceum (strain ATCC 12472 / DSM 30191 / JCM 1249 / CCUG 213 / NBRC 12614 / NCIMB 9131 / NCTC 9757 / MK) protein is S-adenosylmethionine synthase.